The chain runs to 180 residues: Small ribosomal subunit protein uS4 (180 aa).

Positions 103 to 165 (RRLQTIVYRK…KGSPFAKEGH (63 aa)) constitute an S4 RNA-binding domain.

The protein belongs to the universal ribosomal protein uS4 family. Part of the 30S ribosomal subunit. Contacts protein S5. The interaction surface between S4 and S5 is involved in control of translational fidelity.

In terms of biological role, one of the primary rRNA binding proteins, it binds directly to 16S rRNA where it nucleates assembly of the body of the 30S subunit. With S5 and S12 plays an important role in translational accuracy. The polypeptide is Small ribosomal subunit protein uS4 (Thermococcus kodakarensis (strain ATCC BAA-918 / JCM 12380 / KOD1) (Pyrococcus kodakaraensis (strain KOD1))).